The primary structure comprises 277 residues: Urease accessory protein UreD (277 aa).

It belongs to the UreD family. In terms of assembly, ureD, UreF and UreG form a complex that acts as a GTP-hydrolysis-dependent molecular chaperone, activating the urease apoprotein by helping to assemble the nickel containing metallocenter of UreC. The UreE protein probably delivers the nickel.

It localises to the cytoplasm. Functionally, required for maturation of urease via the functional incorporation of the urease nickel metallocenter. In Pseudomonas putida (strain GB-1), this protein is Urease accessory protein UreD.